The primary structure comprises 471 residues: V-type ATP synthase beta chain (471 aa).

The protein belongs to the ATPase alpha/beta chains family.

Produces ATP from ADP in the presence of a proton gradient across the membrane. The V-type beta chain is a regulatory subunit. The sequence is that of V-type ATP synthase beta chain from Streptococcus pyogenes serotype M28 (strain MGAS6180).